Here is a 483-residue protein sequence, read N- to C-terminus: MFS-type transporter ppzB (483 aa).

Helical transmembrane passes span 18–38 (FILT…GILL), 62–82 (AFLA…GWAA), 96–116 (MFLV…LLVV), 149–169 (IGTI…LGGV), and 178–198 (AVFA…ALVI). The N-linked (GlcNAc...) asparagine glycan is linked to asparagine 219. 6 helical membrane passes run 281–301 (LAML…ATVP), 310–330 (FSSL…FALG), 344–364 (AAAT…GLPE), 374–394 (VALF…VTSP), 424–444 (FGFS…LGGF), and 453–473 (VMGA…FLFV).

Belongs to the major facilitator superfamily. TCR/Tet family.

Its subcellular location is the membrane. Its function is as follows. MFS-type transporter; part of the gene cluster that mediates the biosynthesis of pyrrolopyrazines, secondary metabolites showing insecticidal activity. Probably involved in the secretion of peramine and other pyrrolopyrazines. The polypeptide is MFS-type transporter ppzB (Metarhizium rileyi (strain RCEF 4871) (Nomuraea rileyi)).